A 182-amino-acid chain; its full sequence is ATP-dependent protease subunit HslV (182 aa).

Residue threonine 7 is part of the active site. 3 residues coordinate Na(+): glycine 162, cysteine 165, and threonine 168.

The protein belongs to the peptidase T1B family. HslV subfamily. In terms of assembly, a double ring-shaped homohexamer of HslV is capped on each side by a ring-shaped HslU homohexamer. The assembly of the HslU/HslV complex is dependent on binding of ATP.

The protein resides in the cytoplasm. It catalyses the reaction ATP-dependent cleavage of peptide bonds with broad specificity.. Allosterically activated by HslU binding. Functionally, protease subunit of a proteasome-like degradation complex believed to be a general protein degrading machinery. The polypeptide is ATP-dependent protease subunit HslV (Legionella pneumophila (strain Lens)).